A 370-amino-acid polypeptide reads, in one-letter code: ATP synthase gamma chain, chloroplastic (370 aa).

The N-terminal 55 residues, 1 to 55 (MKFFCVAGLLASAAAFQAQPAAFTTYSPAVGGATSNVFSESSSPAHRNRRATIVM), are a transit peptide targeting the chloroplast. C145 is a catalytic residue.

This sequence belongs to the ATPase gamma chain family. In terms of assembly, F-type ATPases have 2 components, CF(1) - the catalytic core - and CF(0) - the membrane proton channel. CF(1) has five subunits: alpha(3), beta(3), gamma(1), delta(1), epsilon(1). CF(0) has four main subunits: a, b, b' and c.

It is found in the plastid. The protein localises to the chloroplast thylakoid membrane. Its function is as follows. Produces ATP from ADP in the presence of a proton gradient across the membrane. The gamma chain is believed to be important in regulating ATPase activity and the flow of protons through the CF(0) complex. This chain is ATP synthase gamma chain, chloroplastic (ATPC), found in Trieres chinensis (Marine centric diatom).